The primary structure comprises 98 residues: Protein Vpr (98 aa).

The segment at 1 to 42 (MEQLPEDQGPQREPYNEWTLEILEELKREAVRHFPRDWLHQL) is homooligomerization. Phosphoserine; by host occurs at positions 79 and 98.

The protein belongs to the HIV-1 VPR protein family. As to quaternary structure, homooligomer, may form homodimer. Interacts with p6-gag region of the Pr55 Gag precursor protein through a (Leu-X-X)4 motif near the C-terminus of the P6gag protein. Interacts with host UNG. May interact with host RAD23A/HHR23A. Interacts with host VPRBP/DCAF1, leading to hijack the CUL4A-RBX1-DDB1-DCAF1/VPRBP complex, mediating ubiquitination of host proteins such as TERT and ZGPAT and arrest of the cell cycle in G2 phase. In terms of processing, phosphorylated on several residues by host. These phosphorylations regulate VPR activity for the nuclear import of the HIV-1 pre-integration complex.

It is found in the virion. Its subcellular location is the host nucleus. The protein resides in the host extracellular space. Its function is as follows. During virus replication, may deplete host UNG protein, and incude G2-M cell cycle arrest. Acts by targeting specific host proteins for degradation by the 26S proteasome, through association with the cellular CUL4A-DDB1 E3 ligase complex by direct interaction with host VPRPB/DCAF-1. Cell cycle arrest reportedly occurs within hours of infection and is not blocked by antiviral agents, suggesting that it is initiated by the VPR carried into the virion. Additionally, VPR induces apoptosis in a cell cycle dependent manner suggesting that these two effects are mechanistically linked. Detected in the serum and cerebrospinal fluid of AIDS patient, VPR may also induce cell death to bystander cells. Functionally, during virus entry, plays a role in the transport of the viral pre-integration (PIC) complex to the host nucleus. This function is crucial for viral infection of non-dividing macrophages. May act directly at the nuclear pore complex, by binding nucleoporins phenylalanine-glycine (FG)-repeat regions. The protein is Protein Vpr of Pan troglodytes (Chimpanzee).